Reading from the N-terminus, the 502-residue chain is Maturase K (502 aa).

It belongs to the intron maturase 2 family. MatK subfamily.

The protein resides in the plastid. It localises to the chloroplast. Its function is as follows. Usually encoded in the trnK tRNA gene intron. Probably assists in splicing its own and other chloroplast group II introns. The sequence is that of Maturase K from Brassica oleracea (Wild cabbage).